The chain runs to 310 residues: tRNA dimethylallyltransferase (310 aa).

13–20 provides a ligand contact to ATP; it reads GPTASGKT. 15–20 is a substrate binding site; the sequence is TASGKT. Interaction with substrate tRNA stretches follow at residues 38 to 41, 162 to 166, 243 to 248, and 276 to 283; these read DSAL, QRLSR, RCVGYR, and KRQITWLR.

Belongs to the IPP transferase family. In terms of assembly, monomer. The cofactor is Mg(2+).

The enzyme catalyses adenosine(37) in tRNA + dimethylallyl diphosphate = N(6)-dimethylallyladenosine(37) in tRNA + diphosphate. Catalyzes the transfer of a dimethylallyl group onto the adenine at position 37 in tRNAs that read codons beginning with uridine, leading to the formation of N6-(dimethylallyl)adenosine (i(6)A). This Vibrio atlanticus (strain LGP32) (Vibrio splendidus (strain Mel32)) protein is tRNA dimethylallyltransferase.